A 117-amino-acid chain; its full sequence is uncharacterized protein (117 aa).

The protein localises to the cytoplasm. The protein resides in the nucleus. This is an uncharacterized protein from Saccharomyces cerevisiae (strain ATCC 204508 / S288c) (Baker's yeast).